The following is a 398-amino-acid chain: Tryptophan synthase beta chain (398 aa).

Lys-88 bears the N6-(pyridoxal phosphate)lysine mark.

It belongs to the TrpB family. Tetramer of two alpha and two beta chains. Requires pyridoxal 5'-phosphate as cofactor.

It carries out the reaction (1S,2R)-1-C-(indol-3-yl)glycerol 3-phosphate + L-serine = D-glyceraldehyde 3-phosphate + L-tryptophan + H2O. It functions in the pathway amino-acid biosynthesis; L-tryptophan biosynthesis; L-tryptophan from chorismate: step 5/5. The beta subunit is responsible for the synthesis of L-tryptophan from indole and L-serine. In Mannheimia succiniciproducens (strain KCTC 0769BP / MBEL55E), this protein is Tryptophan synthase beta chain.